The sequence spans 229 residues: Coiled-coil domain-containing protein 134 (229 aa).

The signal sequence occupies residues 1 to 22 (MDLLQFLAFLFVLLLSGMGATG). N148 is a short sequence motif (prevents secretion from ER). N148 carries N-linked (GlcNAc...) asparagine glycosylation. Positions 193–229 (TDPFQKALREEEKRRKKEEKRKEIRKGPRISRSQSEL) are disordered. Positions 196 to 218 (FQKALREEEKRRKKEEKRKEIRK) form a coiled coil. Residues 206-213 (RRKKEEKR) carry the Nuclear localization signal motif.

Belongs to the CCDC134 family. Interacts with TADA2A. Associates with the PCAF complex via TADA2A binding. O-glycosylated, with additional sialic acid modifications. As to expression, expressed in cervical gland, cervical squamous epithelium, endometrium, stomach, kidney distal convoluted tubule, spermatogenic cells in testis, mammary gland, liver and striated muscle (at protein level). Also detected in placenta. Highest expression in testis relative to other tissues. Detected in T cells and dendritic cells; highly expressed in activated CD8(+) T cells, and also expressed at lower levels in CD4(+) T cells.

Its subcellular location is the endoplasmic reticulum lumen. The protein localises to the secreted. It localises to the cytoplasm. The protein resides in the nucleus. In terms of biological role, molecular adapter required to prevent protein hyperglycosylation of HSP90B1: during translation, associates with nascent HSP90B1 and the STT3A catalytic component of the OST-A complex and tethers them to a specialized translocon that forms a microenvironment for HSP90B1 folding. In the CCDC134-containing translocon, STT3A associates with the SRT pseudosubstrate motif of HSP90B1, preventing access to facultative glycosylation sites until folding is completed, preventing hyperglycosylation and subsequent degradation of HSP90B1. In extracellular secreted form, promotes proliferation and activation of CD8(+) T-cells, suggesting a cytokine-like function. May inhibit ERK and JNK signaling activity. May suppress cell migration and invasion activity, via its effects on ERK and JNK signaling. May also localize in the nucleus: enhances stability of the PCAF histone acetyltransferase (HAT) complex member TADA2A and thus promotes PCAF-mediated histone acetyltransferase activity. Has a critical role in the regulation of osteogenesis and bone development. In Homo sapiens (Human), this protein is Coiled-coil domain-containing protein 134.